A 390-amino-acid chain; its full sequence is ATP phosphoribosyltransferase regulatory subunit (390 aa).

It belongs to the class-II aminoacyl-tRNA synthetase family. HisZ subfamily. In terms of assembly, heteromultimer composed of HisG and HisZ subunits.

The protein localises to the cytoplasm. It participates in amino-acid biosynthesis; L-histidine biosynthesis; L-histidine from 5-phospho-alpha-D-ribose 1-diphosphate: step 1/9. Its function is as follows. Required for the first step of histidine biosynthesis. May allow the feedback regulation of ATP phosphoribosyltransferase activity by histidine. The polypeptide is ATP phosphoribosyltransferase regulatory subunit (Bacillus velezensis (strain DSM 23117 / BGSC 10A6 / LMG 26770 / FZB42) (Bacillus amyloliquefaciens subsp. plantarum)).